The primary structure comprises 237 residues: D-aminoacyl-tRNA deacylase (237 aa).

The protein belongs to the DtdA deacylase family. As to quaternary structure, monomer. Requires Zn(2+) as cofactor.

It carries out the reaction a D-aminoacyl-tRNA + H2O = a tRNA + a D-alpha-amino acid + H(+). The catalysed reaction is glycyl-tRNA(Ala) + H2O = tRNA(Ala) + glycine + H(+). Functionally, D-aminoacyl-tRNA deacylase with broad substrate specificity. By recycling D-aminoacyl-tRNA to D-amino acids and free tRNA molecules, this enzyme counteracts the toxicity associated with the formation of D-aminoacyl-tRNA entities in vivo. In Metallosphaera sedula (strain ATCC 51363 / DSM 5348 / JCM 9185 / NBRC 15509 / TH2), this protein is D-aminoacyl-tRNA deacylase.